The sequence spans 234 residues: Phosphoribosylaminoimidazole-succinocarboxamide synthase (234 aa).

It belongs to the SAICAR synthetase family.

It carries out the reaction 5-amino-1-(5-phospho-D-ribosyl)imidazole-4-carboxylate + L-aspartate + ATP = (2S)-2-[5-amino-1-(5-phospho-beta-D-ribosyl)imidazole-4-carboxamido]succinate + ADP + phosphate + 2 H(+). It functions in the pathway purine metabolism; IMP biosynthesis via de novo pathway; 5-amino-1-(5-phospho-D-ribosyl)imidazole-4-carboxamide from 5-amino-1-(5-phospho-D-ribosyl)imidazole-4-carboxylate: step 1/2. This is Phosphoribosylaminoimidazole-succinocarboxamide synthase from Staphylococcus carnosus (strain TM300).